A 583-amino-acid chain; its full sequence is SHC-transforming protein 1 (583 aa).

At M1 the chain carries N-acetylmethionine. Disordered stretches follow at residues 1–92 and 113–137; these read MDLL…DDGE and KLSGGGGRRTRVEGGQLGGEEWTRH. Over residues 16–44 the composition is skewed to low complexity; it reads ESLSSLEEGASGSTPPEELPSPSASSLGP. Position 36 is a phosphoserine (S36). Residue S139 is modified to Phosphoserine. The residue at position 154 (K154) is an N6-acetyllysine. The region spanning 156-339 is the PID domain; that stretch reads MGPGVSYLVR…AGFDGSAWDE (184 aa). The CH1 stretch occupies residues 340–487; it reads EEEEPPDHQY…SMAEQLRGEP (148 aa). Y349 and Y350 each carry phosphotyrosine. The interval 372 to 416 is disordered; it reads AAPGAARSTAPSAQTPSHLGATLPVGQPVGGDPEVRKQMPPPPPC. Position 427 is a phosphotyrosine (Y427). S453 carries the post-translational modification Phosphoserine. The 92-residue stretch at 488–579 folds into the SH2 domain; that stretch reads WFHGKLSRRE…GSELCLQQPV (92 aa).

Interacts with CPNE3; this interaction may mediate the binding of CPNE3 with ERBB2. Interacts with the Trk receptors NTRK1, NTRK2 and NTRK3; in a phosphotyrosine-dependent manner. Interacts with the NPXY motif of tyrosine-phosphorylated IGF1R and INSR in vitro via the PID domain. Once activated, binds to GRB2. Interacts with tyrosine-phosphorylated CD3T and DDR2. Interacts with the N-terminal region of APS. Interacts with phosphorylated LRP1 and IRS4. Interacts with INPP5D/SHIP1 and INPPL1/SHIP2. Interacts with ALK, GAB2, GRB7 and KIT. Interacts with PTPN6/SHP (tyrosine phosphorylated). Identified in a complex containing FGFR4, NCAM1, CDH2, PLCG1, FRS2, SRC, SHC1, GAP43 and CTTN. Interacts with FLT4 (tyrosine-phosphorylated). Interacts with EPHB1 and GRB2; activates the MAPK/ERK cascade to regulate cell migration. Interacts with PDGFRB (tyrosine-phosphorylated). Interacts with ERBB4. Interacts with TEK/TIE2 (tyrosine-phosphorylated). Interacts with PTK2/FAK1. Interacts with CEACAM1; this interaction is CEACAM1-phosphorylation-dependent and mediates interaction with EGFR or INSR resulting in decrease coupling of SHC1 to the MAPK3/ERK1-MAPK1/ERK2 pathway. Interacts (via PID domain) with PEAK1 (when phosphorylated). Found in a complex with PPP1CA, PPP1CC, SHC1 and PEAK1. Post-translationally, phosphorylated by activated epidermal growth factor receptor. Phosphorylated in response to KIT signaling. Tyrosine phosphorylated in response to FLT3 and FLT4 signaling and by ligand-activated ALK. Tyrosine phosphorylated by ligand-activated PDGFRB. Tyrosine phosphorylated by TEK/TIE2. May be tyrosine phosphorylated by activated PTK2/FAK1. Tyrosine phosphorylated by activated PTK2B/PYK2. Dephosphorylation by PTPN2 may regulate interaction with GRB2.

The protein resides in the cytoplasm. Its subcellular location is the cell junction. It is found in the focal adhesion. Its function is as follows. Signaling adapter that couples activated growth factor receptors to signaling pathways. Participates in a signaling cascade initiated by activated KIT and KITLG/SCF. Participates in signaling downstream of the angiopoietin receptor TEK/TIE2, and plays a role in the regulation of endothelial cell migration and sprouting angiogenesis. The polypeptide is SHC-transforming protein 1 (SHC1) (Pongo abelii (Sumatran orangutan)).